The chain runs to 209 residues: Ribosomal RNA large subunit methyltransferase E (209 aa).

Gly63, Trp65, Asp83, Asp99, and Asp124 together coordinate S-adenosyl-L-methionine. The active-site Proton acceptor is Lys164.

This sequence belongs to the class I-like SAM-binding methyltransferase superfamily. RNA methyltransferase RlmE family.

It is found in the cytoplasm. It catalyses the reaction uridine(2552) in 23S rRNA + S-adenosyl-L-methionine = 2'-O-methyluridine(2552) in 23S rRNA + S-adenosyl-L-homocysteine + H(+). Its function is as follows. Specifically methylates the uridine in position 2552 of 23S rRNA at the 2'-O position of the ribose in the fully assembled 50S ribosomal subunit. The sequence is that of Ribosomal RNA large subunit methyltransferase E from Shewanella frigidimarina (strain NCIMB 400).